A 166-amino-acid polypeptide reads, in one-letter code: Large ribosomal subunit protein uL10 (166 aa).

The protein belongs to the universal ribosomal protein uL10 family. As to quaternary structure, part of the ribosomal stalk of the 50S ribosomal subunit. The N-terminus interacts with L11 and the large rRNA to form the base of the stalk. The C-terminus forms an elongated spine to which L12 dimers bind in a sequential fashion forming a multimeric L10(L12)X complex.

In terms of biological role, forms part of the ribosomal stalk, playing a central role in the interaction of the ribosome with GTP-bound translation factors. The chain is Large ribosomal subunit protein uL10 from Pseudomonas putida (strain W619).